The following is an 80-amino-acid chain: Defensin-like protein 51 (80 aa).

The first 27 residues, methionine 1–alanine 27, serve as a signal peptide directing secretion. 4 cysteine pairs are disulfide-bonded: cysteine 39/cysteine 79, cysteine 43/cysteine 66, cysteine 52/cysteine 77, and cysteine 56/cysteine 78.

Belongs to the DEFL family.

It is found in the secreted. The chain is Defensin-like protein 51 (LCR48) from Arabidopsis thaliana (Mouse-ear cress).